The chain runs to 168 residues: ATP synthase subunit d, mitochondrial (168 aa).

The protein belongs to the ATPase d subunit family. As to quaternary structure, F-type ATPases have 2 components, CF(1) - the catalytic core - and CF(0) - the membrane proton channel. CF(0) seems to have nine subunits: a, b, c, d, e, f, g, F6 and 8 (or A6L).

The protein localises to the mitochondrion. It is found in the mitochondrion inner membrane. In terms of biological role, mitochondrial membrane ATP synthase (F(1)F(0) ATP synthase or Complex V) produces ATP from ADP in the presence of a proton gradient across the membrane which is generated by electron transport complexes of the respiratory chain. F-type ATPases consist of two structural domains, F(1) - containing the extramembraneous catalytic core, and F(0) - containing the membrane proton channel, linked together by a central stalk and a peripheral stalk. During catalysis, ATP synthesis in the catalytic domain of F(1) is coupled via a rotary mechanism of the central stalk subunits to proton translocation. Part of the complex F(0) domain and the peripheric stalk, which acts as a stator to hold the catalytic alpha(3)beta(3) subcomplex and subunit a/ATP6 static relative to the rotary elements. This Arabidopsis thaliana (Mouse-ear cress) protein is ATP synthase subunit d, mitochondrial.